Here is a 163-residue protein sequence, read N- to C-terminus: Adenosine 5'-monophosphoramidase HINT2 (163 aa).

The N-terminal 17 residues, 1–17 (MAAAVLLAVGLRAARRT), are a transit peptide targeting the mitochondrion. Lys45 carries the N6-succinyllysine modification. The 109-residue stretch at 55–163 (IFSRILDRSL…GGRQLQWPPG (109 aa)) folds into the HIT domain. The AMP site is built by Ser63 and Asp80. An N6-acetyllysine modification is found at Lys119. The residue at position 128 (Lys128) is an N6-acetyllysine; alternate. Lys128 is subject to N6-succinyllysine; alternate. Asn136 lines the AMP pocket. At Lys139 the chain carries N6-acetyllysine. Residues 142-145 (AQSV) and 149-151 (HIH) contribute to the AMP site. The short motif at 147–151 (HLHIH) is the Histidine triad motif element. His149 serves as the catalytic Tele-AMP-histidine intermediate.

The protein belongs to the HINT family.

The protein resides in the mitochondrion. It catalyses the reaction adenosine 5'-phosphoramidate + H2O = AMP + NH4(+). Its function is as follows. Exhibits adenosine 5'-monophosphoramidase activity, hydrolyzing purine nucleotide phosphoramidates with a single phosphate group such as adenosine 5'monophosphoramidate (AMP-NH2) to yield AMP and NH2. Hydrolyzes adenosine 5'-O-p-nitrophenylphosphoramidate (AMP-pNA). May be involved in steroid biosynthesis. May play a role in apoptosis. This Mus musculus (Mouse) protein is Adenosine 5'-monophosphoramidase HINT2.